Consider the following 194-residue polypeptide: Ras-related protein Rab-22A (194 aa).

12 to 20 is a binding site for GTP; it reads GDTGVGKSS. The Effector region signature appears at 34–42; sequence INPTIGASF. GTP contacts are provided by residues 60 to 64, 118 to 121, and 148 to 150; these read DTAGQ, NKCD, and SAK. Residues 170 to 194 are disordered; it reads DANPPSGGKGFKLRRQPSEPQRSCC. 2 S-geranylgeranyl cysteine lipidation sites follow: cysteine 193 and cysteine 194.

It belongs to the small GTPase superfamily. Rab family. Interacts directly with ZFYVE20. Interacts (in its GTP-bound form) with RINL and RABGEF1. Binds EEA1.

It localises to the endosome membrane. Its subcellular location is the cell membrane. It is found in the early endosome. The protein resides in the late endosome. The protein localises to the cell projection. It localises to the ruffle. Its subcellular location is the cytoplasmic vesicle. It is found in the phagosome. The protein resides in the phagosome membrane. In terms of biological role, plays a role in endocytosis and intracellular protein transport. Mediates trafficking of TF from early endosomes to recycling endosomes. Required for NGF-mediated endocytosis of NTRK1, and subsequent neurite outgrowth. Binds GTP and GDP and has low GTPase activity. Alternates between a GTP-bound active form and a GDP-bound inactive form. The polypeptide is Ras-related protein Rab-22A (RAB22A) (Canis lupus familiaris (Dog)).